Consider the following 99-residue polypeptide: Nucleoid-associated protein EbfC (99 aa).

Belongs to the YbaB/EbfC family. In terms of assembly, homodimer.

It is found in the cytoplasm. It localises to the nucleoid. In terms of biological role, binds to DNA and alters its conformation. May be involved in regulation of gene expression, nucleoid organization and DNA protection. This chain is Nucleoid-associated protein EbfC, found in Borrelia hermsii (strain HS1 / DAH).